The primary structure comprises 472 residues: Probable dipeptidase A (472 aa).

Residue Cys-10 is part of the active site.

This sequence belongs to the peptidase C69 family.

It carries out the reaction an L-aminoacyl-L-amino acid + H2O = 2 an L-alpha-amino acid. The chain is Probable dipeptidase A (pepDA) from Streptococcus pyogenes serotype M18 (strain MGAS8232).